Here is a 313-residue protein sequence, read N- to C-terminus: Ankyrin repeat family A protein 2 (313 aa).

ANK repeat units follow at residues 148-180 (ANSL…HTDE), 181-213 (EGFT…LLGK), 214-246 (GRES…EYDW), 247-279 (NGGT…IETD), and 280-313 (SGYN…NIKE).

In terms of assembly, interacts (via ANK repeats) with CCDC8 (via PxLPxI/L motif); mediates the interaction with the 3M complex which is composed of CCDC8, CUL7 and OBSL1. Interacts (via ANK repeats) with HDAC4 (via PxLPxI/L motif). Interacts (via ANK repeats) with HDAC5 (via PxLPxI/L motif). Interacts (via ANK repeats) with LRP2/megalin (via PxLPxI/L motif). Interacts (via ANK repeats) with RFX7 (via PxLPxI/L motif). Interacts with AHRR. Interacts with NEK6.

The protein localises to the cytoplasm. The protein resides in the cytoskeleton. It localises to the membrane. In terms of biological role, may regulate the interaction between the 3M complex and the histone deacetylases HDAC4 and HDAC5. May also regulate LRP2/megalin. This chain is Ankyrin repeat family A protein 2 (ANKRA2), found in Homo sapiens (Human).